Here is a 62-residue protein sequence, read N- to C-terminus: U8-theraphotoxin-Cg1a 1 (62 aa).

A signal peptide spans 1 to 21 (MKTLVLFIIFGLAALFLLSSA). Positions 22 to 29 (NELEETER) are excised as a propeptide. Intrachain disulfides connect cysteine 31–cysteine 46, cysteine 38–cysteine 51, and cysteine 45–cysteine 58.

This sequence belongs to the neurotoxin 10 (Hwtx-1) family. 30 (Jztx-14) subfamily. In terms of tissue distribution, expressed by the venom gland.

The protein resides in the secreted. Its function is as follows. Probable ion channel inhibitor. The polypeptide is U8-theraphotoxin-Cg1a 1 (Chilobrachys guangxiensis (Chinese earth tiger tarantula)).